The primary structure comprises 384 residues: UDP-N-acetylglucosamine--N-acetylmuramyl-(pentapeptide) pyrophosphoryl-undecaprenol N-acetylglucosamine transferase (384 aa).

UDP-N-acetyl-alpha-D-glucosamine-binding positions include 17-19 (TGG), Asn131, Arg172, Ser200, and Gln301.

Belongs to the glycosyltransferase 28 family. MurG subfamily.

Its subcellular location is the cell inner membrane. It carries out the reaction di-trans,octa-cis-undecaprenyl diphospho-N-acetyl-alpha-D-muramoyl-L-alanyl-D-glutamyl-meso-2,6-diaminopimeloyl-D-alanyl-D-alanine + UDP-N-acetyl-alpha-D-glucosamine = di-trans,octa-cis-undecaprenyl diphospho-[N-acetyl-alpha-D-glucosaminyl-(1-&gt;4)]-N-acetyl-alpha-D-muramoyl-L-alanyl-D-glutamyl-meso-2,6-diaminopimeloyl-D-alanyl-D-alanine + UDP + H(+). The protein operates within cell wall biogenesis; peptidoglycan biosynthesis. Functionally, cell wall formation. Catalyzes the transfer of a GlcNAc subunit on undecaprenyl-pyrophosphoryl-MurNAc-pentapeptide (lipid intermediate I) to form undecaprenyl-pyrophosphoryl-MurNAc-(pentapeptide)GlcNAc (lipid intermediate II). This is UDP-N-acetylglucosamine--N-acetylmuramyl-(pentapeptide) pyrophosphoryl-undecaprenol N-acetylglucosamine transferase from Granulibacter bethesdensis (strain ATCC BAA-1260 / CGDNIH1).